The chain runs to 223 residues: Small ribosomal subunit protein uS3 (223 aa).

Positions 39-108 constitute a KH type-2 domain; it reads IRNFVKKNSY…NILINIVEVK (70 aa).

This sequence belongs to the universal ribosomal protein uS3 family. As to quaternary structure, part of the 30S ribosomal subunit. Forms a tight complex with proteins S10 and S14.

Functionally, binds the lower part of the 30S subunit head. Binds mRNA in the 70S ribosome, positioning it for translation. This chain is Small ribosomal subunit protein uS3, found in Clostridium botulinum (strain Kyoto / Type A2).